We begin with the raw amino-acid sequence, 454 residues long: GTPase Obg (454 aa).

The Obg domain maps to 2 to 159; the sequence is SDFVDEAVLH…VDIRLELKTI (158 aa). Positions 60–87 are disordered; it reads YQRRPHRKAENGAPGQGSNRSGASGADL. Positions 160 to 335 constitute an OBG-type G domain; it reads ADVGLVGFPS…LAYALGEQVA (176 aa). GTP contacts are provided by residues 166–173, 191–195, 212–215, 287–290, and 316–318; these read GFPSAGKS, FTTLV, DVPG, NKID, and SAA. Residues serine 173 and threonine 193 each contribute to the Mg(2+) site. Positions 353-435 constitute an OCT domain; sequence PREIGEIPFQ…DNPVVFDWDP (83 aa).

It belongs to the TRAFAC class OBG-HflX-like GTPase superfamily. OBG GTPase family. In terms of assembly, monomer. The cofactor is Mg(2+).

The protein localises to the cytoplasm. Functionally, an essential GTPase which binds GTP, GDP and possibly (p)ppGpp with moderate affinity, with high nucleotide exchange rates and a fairly low GTP hydrolysis rate. Plays a role in control of the cell cycle, stress response, ribosome biogenesis and in those bacteria that undergo differentiation, in morphogenesis control. The sequence is that of GTPase Obg from Thermobifida fusca (strain YX).